A 280-amino-acid polypeptide reads, in one-letter code: Tryptophan synthase alpha chain (280 aa).

Catalysis depends on proton acceptor residues glutamate 49 and aspartate 60.

It belongs to the TrpA family. As to quaternary structure, tetramer of two alpha and two beta chains.

It carries out the reaction (1S,2R)-1-C-(indol-3-yl)glycerol 3-phosphate + L-serine = D-glyceraldehyde 3-phosphate + L-tryptophan + H2O. It functions in the pathway amino-acid biosynthesis; L-tryptophan biosynthesis; L-tryptophan from chorismate: step 5/5. Functionally, the alpha subunit is responsible for the aldol cleavage of indoleglycerol phosphate to indole and glyceraldehyde 3-phosphate. The polypeptide is Tryptophan synthase alpha chain (Corynebacterium glutamicum (strain R)).